Here is a 269-residue protein sequence, read N- to C-terminus: Aquaporin-1 (269 aa).

Residues Ala2 to Trp11 lie on the Cytoplasmic side of the membrane. Residues Arg12–Ile29 form a helical membrane-spanning segment. Over Gly30 to Val46 the chain is Extracellular. The N-linked (GlcNAc...) asparagine glycan is linked to Asn42. The chain crosses the membrane as a helical span at residues Gln47–Gln65. The Cytoplasmic portion of the chain corresponds to Ser66–Gly68. The stretch at His69–Gly82 is an intramembrane region. An NPA 1 motif is present at residues Asn76 to Ala78. At Leu83 to Ser90 the chain is on the cytoplasmic side. A helical transmembrane segment spans residues Ile91–Thr109. Residues Ala110–Val133 lie on the Extracellular side of the membrane. The helical transmembrane segment at Asn134–Val153 threads the bilayer. Residues Leu154–Asp163 lie on the Cytoplasmic side of the membrane. A helical membrane pass occupies residues Leu164 to Leu181. Topologically, residues Leu182–Tyr186 are extracellular. Residues Thr187–Ser199 lie within the membrane without spanning it. The NPA 2 signature appears at Asn192–Ala194. The Extracellular portion of the chain corresponds to Ala200–Phe206. Asn205 is a glycosylation site (N-linked (GlcNAc...) asparagine). Residues Ser207–Val224 traverse the membrane as a helical segment. At Leu225–Lys269 the chain is on the cytoplasmic side. Ser247 bears the Phosphoserine mark. Tyr253 bears the Phosphotyrosine mark. Ser262 is modified (phosphoserine).

Belongs to the MIP/aquaporin (TC 1.A.8) family. Homotetramer; each monomer provides an independent water pore. Component of the ankyrin-1 complex in the erythrocyte, composed of ANK1, RHCE, RHAG, SLC4A1, EPB42, GYPA, GYPB and AQP1. Interacts with EPHB2; involved in endolymph production in the inner ear. Identified in a complex with STOM. Interacts (via the N-terminal) with ANK1 (via ANK 1-5 repeats). Interacts (via the C-terminal) with EPB42. As to expression, detected in erythrocytes (at protein level). Expressed in a number of tissues including erythrocytes, renal tubules, retinal pigment epithelium, heart, lung, skeletal muscle, kidney and pancreas. Weakly expressed in brain, placenta and liver.

It is found in the cell membrane. It catalyses the reaction H2O(in) = H2O(out). The enzyme catalyses nitric oxide(out) = nitric oxide(in). The catalysed reaction is CO2(out) = CO2(in). It carries out the reaction glycerol(in) = glycerol(out). It catalyses the reaction H2O2(out) = H2O2(in). The enzyme catalyses K(+)(in) = K(+)(out). The catalysed reaction is Na(+)(in) = Na(+)(out). Its activity is regulated as follows. The water channel activity is inhibited by P-choloromercuribenzene sulphonate and diethylpyrocarbonate(DPPC). The glycerol channel activity is inhibited by P-choloromercuribenzene sulphonate, diethylpyrocarbonate(DPPC), phloretin and Cu(2+). Inhibited by mercury. Its function is as follows. Forms a water channel that facilitates the transport of water across cell membranes, playing a crucial role in water homeostasis in various tissues. Could also be permeable to small solutes including hydrogen peroxide, glycerol and gases such as amonnia (NH3), nitric oxide (NO) and carbon dioxide (CO2). Recruited to the ankyrin-1 complex, a multiprotein complex of the erythrocyte membrane, it could be part of a CO2 metabolon, linking facilitated diffusion of CO2 across the membrane, anion exchange of Cl(-)/HCO3(-) and interconversion of dissolved CO2 and carbonic acid in the cytosol. In vitro, it shows non-selective gated cation channel activity and may be permeable to cations like K(+) and Na(+) in vivo. The sequence is that of Aquaporin-1 from Homo sapiens (Human).